The sequence spans 155 residues: SsrA-binding protein (155 aa).

Belongs to the SmpB family.

The protein localises to the cytoplasm. Its function is as follows. Required for rescue of stalled ribosomes mediated by trans-translation. Binds to transfer-messenger RNA (tmRNA), required for stable association of tmRNA with ribosomes. tmRNA and SmpB together mimic tRNA shape, replacing the anticodon stem-loop with SmpB. tmRNA is encoded by the ssrA gene; the 2 termini fold to resemble tRNA(Ala) and it encodes a 'tag peptide', a short internal open reading frame. During trans-translation Ala-aminoacylated tmRNA acts like a tRNA, entering the A-site of stalled ribosomes, displacing the stalled mRNA. The ribosome then switches to translate the ORF on the tmRNA; the nascent peptide is terminated with the 'tag peptide' encoded by the tmRNA and targeted for degradation. The ribosome is freed to recommence translation, which seems to be the essential function of trans-translation. This Moorella thermoacetica (strain ATCC 39073 / JCM 9320) protein is SsrA-binding protein.